The chain runs to 318 residues: Tyrosine recombinase XerD (318 aa).

Positions 5–90 (PSDAKLTGLF…AMRHLYRFLL (86 aa)) constitute a Core-binding (CB) domain. Residues 111 to 310 (GLPKVLSIAD…VEERLKSLVR (200 aa)) enclose the Tyr recombinase domain. Active-site residues include Arg161, Lys185, His262, Arg265, and His288. Tyr297 acts as the O-(3'-phospho-DNA)-tyrosine intermediate in catalysis.

This sequence belongs to the 'phage' integrase family. XerD subfamily. As to quaternary structure, forms a cyclic heterotetrameric complex composed of two molecules of XerC and two molecules of XerD.

The protein localises to the cytoplasm. Functionally, site-specific tyrosine recombinase, which acts by catalyzing the cutting and rejoining of the recombining DNA molecules. The XerC-XerD complex is essential to convert dimers of the bacterial chromosome into monomers to permit their segregation at cell division. It also contributes to the segregational stability of plasmids. The protein is Tyrosine recombinase XerD of Bradyrhizobium diazoefficiens (strain JCM 10833 / BCRC 13528 / IAM 13628 / NBRC 14792 / USDA 110).